A 494-amino-acid chain; its full sequence is Cobyric acid synthase (494 aa).

Residues 248 to 444 enclose the GATase cobBQ-type domain; that stretch reads EIEIAIIKLP…LHGIFENDEW (197 aa). Catalysis depends on Cys329, which acts as the Nucleophile. Residue His436 is part of the active site.

Belongs to the CobB/CobQ family. CobQ subfamily.

It functions in the pathway cofactor biosynthesis; adenosylcobalamin biosynthesis. Functionally, catalyzes amidations at positions B, D, E, and G on adenosylcobyrinic A,C-diamide. NH(2) groups are provided by glutamine, and one molecule of ATP is hydrogenolyzed for each amidation. In Prochlorococcus marinus (strain NATL1A), this protein is Cobyric acid synthase.